We begin with the raw amino-acid sequence, 163 residues long: Neurotrophin-3 (163 aa).

The signal sequence occupies residues 1–3 (IQS). The propeptide occupies 4 to 119 (TSMDQGILTE…VLNRTSRRKR (116 aa)). A disordered region spans residues 35-61 (KQTARTKDGTQTTVKKSEAEADATASQ). N-linked (GlcNAc...) asparagine glycosylation occurs at Asn112.

The protein belongs to the NGF-beta family.

The protein localises to the secreted. Its function is as follows. Seems to promote the survival of visceral and proprioceptive sensory neurons. This Corallus caninus (Emerald tree boa) protein is Neurotrophin-3 (NTF3).